The primary structure comprises 289 residues: ATP synthase gamma chain (289 aa).

The protein belongs to the ATPase gamma chain family. As to quaternary structure, F-type ATPases have 2 components, CF(1) - the catalytic core - and CF(0) - the membrane proton channel. CF(1) has five subunits: alpha(3), beta(3), gamma(1), delta(1), epsilon(1). CF(0) has three main subunits: a, b and c.

It localises to the cell inner membrane. Produces ATP from ADP in the presence of a proton gradient across the membrane. The gamma chain is believed to be important in regulating ATPase activity and the flow of protons through the CF(0) complex. The sequence is that of ATP synthase gamma chain from Coxiella burnetii (strain CbuG_Q212) (Coxiella burnetii (strain Q212)).